A 243-amino-acid polypeptide reads, in one-letter code: Probable transcriptional regulatory protein LGAS_1276 (243 aa).

The interval 1–22 (MSGHSKWHNIQGRKNAQDAKRG) is disordered.

This sequence belongs to the TACO1 family.

Its subcellular location is the cytoplasm. The chain is Probable transcriptional regulatory protein LGAS_1276 from Lactobacillus gasseri (strain ATCC 33323 / DSM 20243 / BCRC 14619 / CIP 102991 / JCM 1131 / KCTC 3163 / NCIMB 11718 / NCTC 13722 / AM63).